Here is a 208-residue protein sequence, read N- to C-terminus: Large ribosomal subunit protein uL3 (208 aa).

Residues 134 to 153 (SKFHREAGSTGQCTSPGRTF) are disordered.

It belongs to the universal ribosomal protein uL3 family. In terms of assembly, part of the 50S ribosomal subunit. Forms a cluster with proteins L14 and L19.

One of the primary rRNA binding proteins, it binds directly near the 3'-end of the 23S rRNA, where it nucleates assembly of the 50S subunit. The sequence is that of Large ribosomal subunit protein uL3 from Treponema pallidum (strain Nichols).